We begin with the raw amino-acid sequence, 210 residues long: GTP pyrophosphokinase YwaC (210 aa).

This sequence belongs to the RelA/SpoT family. As to quaternary structure, homotetramer.

The enzyme catalyses GTP + ATP = guanosine 3'-diphosphate 5'-triphosphate + AMP. The protein operates within purine metabolism; ppGpp biosynthesis; ppGpp from GTP: step 1/2. Functionally, functions as a (p)ppGpp synthase; GDP can be used instead of GTP, resulting in an increase of (p)ppGpp synthesis. Overexpression in relA mutants (triple relA-yjbM-ywaC deletions and single relA deletions) leads to growth arrest; GTP levels fall drastically, various guanine-related nucleotides are synthesized (ppGp or pGpp), the cellular transcriptional profile changes dramatically and 70S ribosome dimerization occurs. Overexpression in the presence of a wild-type relA gene does not have these effects. In eubacteria ppGpp (guanosine 3'-diphosphate 5'-diphosphate) is a mediator of the stringent response that coordinates a variety of cellular activities in response to changes in nutritional abundance. activities in response to changes in nutritional abundance. YwaC has probably a minor role in stringent response. The sequence is that of GTP pyrophosphokinase YwaC (ywaC) from Bacillus subtilis (strain 168).